A 192-amino-acid chain; its full sequence is Probable nicotinate-nucleotide adenylyltransferase (192 aa).

It belongs to the NadD family.

It catalyses the reaction nicotinate beta-D-ribonucleotide + ATP + H(+) = deamido-NAD(+) + diphosphate. The protein operates within cofactor biosynthesis; NAD(+) biosynthesis; deamido-NAD(+) from nicotinate D-ribonucleotide: step 1/1. In terms of biological role, catalyzes the reversible adenylation of nicotinate mononucleotide (NaMN) to nicotinic acid adenine dinucleotide (NaAD). The sequence is that of Probable nicotinate-nucleotide adenylyltransferase from Bradyrhizobium sp. (strain ORS 278).